The sequence spans 344 residues: Polycomb group RING finger protein 2 (344 aa).

The RING-type zinc finger occupies 18–57 (CALCGGYFIDATTIVECLHSFCKTCIVRYLETNKYCPMCD). Glycyl lysine isopeptide (Lys-Gly) (interchain with G-Cter in SUMO2) cross-links involve residues K51 and K88. The short motif at 81–95 (KLVPGLFKDEMKRRR) is the Nuclear localization signal element. Residues 240–253 (TVPTPSEGTNTSGA) are compositionally biased toward polar residues. The disordered stretch occupies residues 240–344 (TVPTPSEGTN…VNGAPVPPLT (105 aa)). A compositionally biased stretch (low complexity) spans 263-313 (APSPATLPATSSSLPSPATPSHGSPSSHGPPATHPTSPTPPSTASGATTAA). Residues 314–328 (NGGSLNCLQTPSSTS) show a composition bias toward polar residues. T344 carries the post-translational modification Phosphothreonine.

As to quaternary structure, exists as both a monomer and homodimer. Component of a PRC1-like complex. Interacts with CBX8, RING1 and RNF2. Interacts with CBX7. Interacts with PHC2. Post-translationally, phosphorylated. Homodimer formation is regulated by phosphorylation with only unphosphorylated proteins forming homodimers. In terms of tissue distribution, detected in all tissues examined with high expression found in placenta lung and kidney and low expression, in liver, pancreas and skeletal muscle.

The protein resides in the nucleus. Functionally, transcriptional repressor. Binds specifically to the DNA sequence 5'-GACTNGACT-3'. Has tumor suppressor activity. May play a role in control of cell proliferation and/or neural cell development. Regulates proliferation of early T progenitor cells by maintaining expression of HES1. Also plays a role in antero-posterior specification of the axial skeleton and negative regulation of the self-renewal activity of hematopoietic stem cells. Component of a Polycomb group (PcG) multiprotein PRC1-like complex, a complex class required to maintain the transcriptionally repressive state of many genes, including Hox genes, throughout development. PcG PRC1 complex acts via chromatin remodeling and modification of histones; it mediates monoubiquitination of histone H2A 'Lys-119', rendering chromatin heritably changed in its expressibility. Within the PRC1-like complex, regulates RNF2 ubiquitin ligase activity. The sequence is that of Polycomb group RING finger protein 2 (PCGF2) from Homo sapiens (Human).